The chain runs to 170 residues: Acireductone dioxygenase (170 aa).

Residues H99, H101, E105, and H144 each contribute to the Fe(2+) site. Positions 99, 101, 105, and 144 each coordinate Ni(2+).

It belongs to the acireductone dioxygenase (ARD) family. In terms of assembly, monomer. Fe(2+) serves as cofactor. Ni(2+) is required as a cofactor.

The enzyme catalyses 1,2-dihydroxy-5-(methylsulfanyl)pent-1-en-3-one + O2 = 3-(methylsulfanyl)propanoate + CO + formate + 2 H(+). It carries out the reaction 1,2-dihydroxy-5-(methylsulfanyl)pent-1-en-3-one + O2 = 4-methylsulfanyl-2-oxobutanoate + formate + 2 H(+). It participates in amino-acid biosynthesis; L-methionine biosynthesis via salvage pathway; L-methionine from S-methyl-5-thio-alpha-D-ribose 1-phosphate: step 5/6. Catalyzes 2 different reactions between oxygen and the acireductone 1,2-dihydroxy-3-keto-5-methylthiopentene (DHK-MTPene) depending upon the metal bound in the active site. Fe-containing acireductone dioxygenase (Fe-ARD) produces formate and 2-keto-4-methylthiobutyrate (KMTB), the alpha-ketoacid precursor of methionine in the methionine recycle pathway. Ni-containing acireductone dioxygenase (Ni-ARD) produces methylthiopropionate, carbon monoxide and formate, and does not lie on the methionine recycle pathway. In Bacillus thuringiensis subsp. konkukian (strain 97-27), this protein is Acireductone dioxygenase.